The chain runs to 148 residues: Leghemoglobin 2 (148 aa).

In terms of domain architecture, Globin spans 2–148; it reads GFTEKQEALV…LSAAIKKAMS (147 aa). Position 30 is a nitrated tyrosine (Tyr30). Heme b is bound at residue Ser45. Phosphoserine is present on Ser45. An O2-binding site is contributed by His63. Heme b-binding residues include Lys66, His95, and Lys98. Tyr136 bears the Nitrated tyrosine mark.

Belongs to the plant globin family. Monomer. In terms of processing, nitrated in effective nodules and particularly in hypoxic conditions; this mechanism may play a protective role in the symbiosis by buffering toxic peroxynitrite NO(2)(-). Nitration level decrease during nodule senescence. Post-translationally, phosphorylation at Ser-45 disrupts the molecular environment of its porphyrin ring oxygen binding pocket, thus leading to a reduced oxygen consumption and to the delivery of oxygen O(2) to symbiosomes. As to expression, stem nodules.

Its subcellular location is the cytoplasm. The protein resides in the cytosol. It localises to the nucleus. In terms of biological role, leghemoglobin that reversibly binds oxygen O(2) through a pentacoordinated heme iron. In stem nodules, facilitates the diffusion of oxygen to the bacteroids while preventing the bacterial nitrogenase from being inactivated by buffering dioxygen, nitric oxide and carbon monoxide, and promoting the formation of reactive oxygen species (ROS, e.g. H(2)O(2)). This role is essential for symbiotic nitrogen fixation (SNF). The polypeptide is Leghemoglobin 2 (Sesbania rostrata).